Consider the following 104-residue polypeptide: Replication restart protein PriB (104 aa).

The SSB domain maps to 1–101; the sequence is MTNRLALSGT…LHAEQIELID (101 aa).

This sequence belongs to the PriB family. Homodimer. Interacts with PriA and DnaT. Component of the replication restart primosome. Primosome assembly occurs via a 'hand-off' mechanism. PriA binds to replication forks, subsequently PriB then DnaT bind; DnaT then displaces ssDNA to generate the helicase loading substrate.

Its function is as follows. Involved in the restart of stalled replication forks, which reloads the replicative helicase on sites other than the origin of replication; the PriA-PriB pathway is the major replication restart pathway. During primosome assembly it facilitates complex formation between PriA and DnaT on DNA; stabilizes PriA on DNA. Stimulates the DNA unwinding activity of PriA helicase. This chain is Replication restart protein PriB, found in Citrobacter koseri (strain ATCC BAA-895 / CDC 4225-83 / SGSC4696).